Consider the following 154-residue polypeptide: Myoglobin (154 aa).

Positions 2–148 (GLSDQEWQQV…FRNDMASKYK (147 aa)) constitute a Globin domain. Residue H65 participates in nitrite binding. H65 serves as a coordination point for O2. Residue H94 participates in heme b binding.

This sequence belongs to the globin family. Monomeric.

The protein localises to the cytoplasm. It is found in the sarcoplasm. The enzyme catalyses Fe(III)-heme b-[protein] + nitric oxide + H2O = Fe(II)-heme b-[protein] + nitrite + 2 H(+). It carries out the reaction H2O2 + AH2 = A + 2 H2O. Monomeric heme protein which primary function is to store oxygen and facilitate its diffusion within muscle tissues. Reversibly binds oxygen through a pentacoordinated heme iron and enables its timely and efficient release as needed during periods of heightened demand. Depending on the oxidative conditions of tissues and cells, and in addition to its ability to bind oxygen, it also has a nitrite reductase activity whereby it regulates the production of bioactive nitric oxide. Under stress conditions, like hypoxia and anoxia, it also protects cells against reactive oxygen species thanks to its pseudoperoxidase activity. The sequence is that of Myoglobin (MB) from Anas poecilorhyncha (Indian spot-billed duck).